The primary structure comprises 658 residues: DNA mismatch repair protein MutL (658 aa).

Positions 114-130 (RQEDSSHATQVKAEDGK) are enriched in basic and acidic residues. Disordered stretches follow at residues 114–137 (RQED…PTAA), 369–401 (DYPT…APQQ), and 438–457 (FGNM…LSDG).

Belongs to the DNA mismatch repair MutL/HexB family.

Functionally, this protein is involved in the repair of mismatches in DNA. It is required for dam-dependent methyl-directed DNA mismatch repair. May act as a 'molecular matchmaker', a protein that promotes the formation of a stable complex between two or more DNA-binding proteins in an ATP-dependent manner without itself being part of a final effector complex. This chain is DNA mismatch repair protein MutL, found in Neisseria meningitidis serogroup A / serotype 4A (strain DSM 15465 / Z2491).